Here is a 676-residue protein sequence, read N- to C-terminus: Forkhead box protein biniou (676 aa).

5 disordered regions span residues 22 to 50, 131 to 160, 203 to 232, 249 to 312, and 583 to 651; these read YHDP…GHPY, AHSA…SSST, QEQA…SRIS, NYSS…PEKP, and IQHA…AYLP. Positions 34 to 48 are enriched in basic residues; the sequence is PHAHSHPHQHTHTGH. The segment covering 133–160 has biased composition (polar residues); the sequence is SAGSASPQSNSKTPTDLPQDLQYASSST. Positions 203 to 220 are enriched in low complexity; it reads QEQAGQQQPQQLPAQQLQ. Polar residues predominate over residues 257 to 273; that stretch reads PAKSLNGSESSPPSQNH. Residues 311–408 constitute a DNA-binding region (fork-head); that stretch reads KPALSYINMI…DEGSLRRRPR (98 aa). Residues 583–593 are compositionally biased toward low complexity; the sequence is IQHAQAQAQAQ. A compositionally biased stretch (basic residues) spans 594 to 611; it reads AHHHHHQHHASHPSHSHQ. Over residues 612 to 625 the composition is skewed to low complexity; the sequence is GHGSMHQNHGTSST. The span at 637–647 shows a compositional bias: basic and acidic residues; the sequence is GIDHSPIDRKP.

In terms of assembly, binds to DNA. In embryo, expressed in all types of visceral muscles and their progenitors (at protein level). In late stage 10 embryo, expressed in the caudal visceral mesoderm and trunk and hindgut visceral mesoderm progenitors.

Its subcellular location is the nucleus. In terms of biological role, component of a regulatory network controlling visceral mesoderm development and midgut morphogenesis. Transcriptional regulator involved in the activation of a large number of genes in the visceral mesoderm including betaTub60D, dpp and Hand. Binds to and regulates a number of enhancers driving expression in the visceral mesoderm in a temporally and spatially restricted manner. Also to binds to enhancers cooperatively with activators, such as bap or HLH54F, to coregulate expression of shared target genes in the visceral mesoderm. Binds to the Ndg enhancer and drives expression of Ndg in the late visceral musculature. May be involved in the transcriptional regulation of wupA in the visceral mesoderm. Plays an indirect role in the later stages of salivary gland positioning. This Drosophila melanogaster (Fruit fly) protein is Forkhead box protein biniou (bin).